Here is a 581-residue protein sequence, read N- to C-terminus: DNA polymerase alpha subunit B (581 aa).

Belongs to the DNA polymerase alpha subunit B family. In terms of assembly, DNA polymerase alpha:primase is a four subunit enzyme complex, which is assembled throughout the cell cycle, and consists of the two DNA polymerase subunits A and B, and the DNA primase large and small subunits. Subunit B binds to subunit A.

It localises to the nucleus. May play an essential role at the early stage of chromosomal DNA replication by coupling the polymerase alpha/primase complex to the cellular replication machinery. Required for the distribution of pie-1 in cell divsion. In Caenorhabditis elegans, this protein is DNA polymerase alpha subunit B (div-1).